We begin with the raw amino-acid sequence, 434 residues long: Meiosis-specific kinetochore protein (434 aa).

Disordered regions lie at residues 1–102 (MDKI…PCET) and 249–289 (VFAE…PDNK). Residues 46–62 (KGKEQGLRKITEKKELS) show a composition bias toward basic and acidic residues. Positions 64–76 (LTGSSSQRPSLLS) are enriched in polar residues. The short motif at 334–336 (STP) is the POLO box domain (PBD)-binding element. The tract at residues 391–394 (EICC) is required for localization to kinetochores. Positions 404–424 (QMRRKDPAVKNRCSPPKDVPL) are disordered.

As to quaternary structure, interacts with CENPC. Interacts with PLK1; required for recruitment of PLK1 at kinetochores. As to expression, germ cell-specific. Expressed in both testis and ovary. Not expressed in other tissues.

Its subcellular location is the chromosome. It is found in the centromere. The protein resides in the kinetochore. In terms of biological role, key regulator of kinetochore function during meiosis I: required both for mono-orientation of kinetochores on sister chromosomes and protection of centromeric cohesin from separase-mediated cleavage. Acts by facilitating kinetochore mono-orientation during meiosis I, when kinetochores on sister chromosomes face the same direction and are thus captured and pulled by spindle fibers from the same pole. Also required to prevent cleavage of cohesin at centromeres during meiosis I, possibly by acting as a regulator of the shugoshin-dependent protection pathway. Acts in collaboration with PLK1: required for PLK1 enrichment to kinetochores. Not required during meiosis II or mitosis. This Mus musculus (Mouse) protein is Meiosis-specific kinetochore protein.